The chain runs to 466 residues: Ribulose bisphosphate carboxylase large chain (466 aa).

The residue at position 5 (Lys5) is an N6,N6,N6-trimethyllysine. Asn114 and Thr164 together coordinate substrate. Lys166 functions as the Proton acceptor in the catalytic mechanism. Residue Lys168 participates in substrate binding. Positions 192, 194, and 195 each coordinate Mg(2+). At Lys192 the chain carries N6-carboxylysine. The active-site Proton acceptor is the His285. Substrate-binding residues include Arg286, His318, and Ser370.

Belongs to the RuBisCO large chain family. Type I subfamily. As to quaternary structure, heterohexadecamer of 8 large chains and 8 small chains; disulfide-linked. The disulfide link is formed within the large subunit homodimers. Requires Mg(2+) as cofactor. Post-translationally, the disulfide bond which can form in the large chain dimeric partners within the hexadecamer appears to be associated with oxidative stress and protein turnover.

The protein localises to the plastid. Its subcellular location is the chloroplast. It carries out the reaction 2 (2R)-3-phosphoglycerate + 2 H(+) = D-ribulose 1,5-bisphosphate + CO2 + H2O. The enzyme catalyses D-ribulose 1,5-bisphosphate + O2 = 2-phosphoglycolate + (2R)-3-phosphoglycerate + 2 H(+). Its function is as follows. RuBisCO catalyzes two reactions: the carboxylation of D-ribulose 1,5-bisphosphate, the primary event in carbon dioxide fixation, as well as the oxidative fragmentation of the pentose substrate in the photorespiration process. Both reactions occur simultaneously and in competition at the same active site. This is Ribulose bisphosphate carboxylase large chain from Moringa oleifera (Horseradish tree).